The following is a 709-amino-acid chain: Rho guanine nucleotide exchange factor 16 (709 aa).

Alanine 2 bears the N-acetylalanine mark. A phosphoserine mark is found at serine 6, serine 41, and serine 107. The interval 22–70 (ELRLDAGGNPASGLPMVRGSPRVRDDAAFQPQVPAPPQPRPPGHEEPWP) is disordered. Residues 114–146 (SREAARRDPKLLPAPSFSLDDMDVDKDPGGMLR) form a disordered region. 3 positions are modified to phosphoserine: serine 174, serine 191, and serine 208. The segment at 180-246 (LAEEPSQPHT…ESSSPEGTQK (67 aa)) is disordered. The span at 191–207 (SPAKNKKTLGRKRGHKG) shows a compositional bias: basic residues. The residue at position 226 (threonine 226) is a Phosphothreonine. 3 positions are modified to phosphoserine: serine 227, serine 230, and serine 240. The tract at residues 275–481 (LDQLSTEERK…MERMEQMYTL (207 aa)) is required for RHOG activation and mediates interaction with EPHA2. The DH domain maps to 284–468 (KRQEAMFEIL…SKLVRQCNEG (185 aa)). Residues 501-620 (WLLKRGELFL…WIVALTHSER (120 aa)) enclose the PH domain. The SH3 domain maps to 629-689 (GDLPQVEITK…PEDFARFITS (61 aa)). Residues 707–709 (TDV) carry the PDZ-binding motif motif.

As to quaternary structure, interacts with ELMO2, EPHA2, RAC1 and RHOG; mediates activation of RAC1 by EPHA2. Interacts with TAX1BP3 (via PDZ domain). May interact with CDC42; stimulated by HPV16 E6.

Its subcellular location is the cytoplasm. Guanyl-nucleotide exchange factor of the RHOG GTPase stimulating the exchange of RHOG-associated GDP for GTP. May play a role in chemotactic cell migration by mediating the activation of RAC1 by EPHA2. May also activate CDC42 and mediate activation of CDC42 by the viral protein HPV16 E6. The chain is Rho guanine nucleotide exchange factor 16 (ARHGEF16) from Homo sapiens (Human).